Here is a 358-residue protein sequence, read N- to C-terminus: Protein-glutamate methylesterase/protein-glutamine glutaminase 1 (358 aa).

Residues 8–125 (RVLIVDDSAV…ARGLEGYAEE (118 aa)) enclose the Response regulatory domain. Position 59 is a 4-aspartylphosphate (aspartate 59). In terms of domain architecture, CheB-type methylesterase spans 165–352 (FRTTDRLIAI…LDRVAERLLA (188 aa)). Catalysis depends on residues serine 177, histidine 203, and aspartate 299.

Belongs to the CheB family. Phosphorylated by CheA. Phosphorylation of the N-terminal regulatory domain activates the methylesterase activity.

It localises to the cytoplasm. It catalyses the reaction [protein]-L-glutamate 5-O-methyl ester + H2O = L-glutamyl-[protein] + methanol + H(+). It carries out the reaction L-glutaminyl-[protein] + H2O = L-glutamyl-[protein] + NH4(+). Involved in chemotaxis. Part of a chemotaxis signal transduction system that modulates chemotaxis in response to various stimuli. Catalyzes the demethylation of specific methylglutamate residues introduced into the chemoreceptors (methyl-accepting chemotaxis proteins or MCP) by CheR. Also mediates the irreversible deamidation of specific glutamine residues to glutamic acid. This chain is Protein-glutamate methylesterase/protein-glutamine glutaminase 1, found in Xanthomonas axonopodis pv. citri (strain 306).